The chain runs to 247 residues: ATP synthase subunit a, chloroplastic (247 aa).

A run of 5 helical transmembrane segments spans residues 38 to 58, 95 to 115, 134 to 154, 199 to 219, and 220 to 240; these read QVLI…IIAV, VPFI…GALL, INTT…AGLT, LVVV…VMFL, and GLFT…AYIG.

It belongs to the ATPase A chain family. F-type ATPases have 2 components, CF(1) - the catalytic core - and CF(0) - the membrane proton channel. CF(1) has five subunits: alpha(3), beta(3), gamma(1), delta(1), epsilon(1). CF(0) has four main subunits: a, b, b' and c.

Its subcellular location is the plastid. The protein localises to the chloroplast thylakoid membrane. Functionally, key component of the proton channel; it plays a direct role in the translocation of protons across the membrane. In Dioscorea elephantipes (Elephant's foot yam), this protein is ATP synthase subunit a, chloroplastic.